The primary structure comprises 176 residues: MKASGTLREYKVVGRCLPTPKSPAPPLYRMRIFAPNHVVAKSRFWYFVSQLKKMKKSSGEIVYCGQVFEKSPLRVKNFGIWLRYDSRSGTHNMYREYRDLTTAGAVTQCYRDMGARHRARAHSIQVMKVEEMAAARCRRPAVKQFHDSRIRFPLPHRVLRRQHKPRFSAKRPNTFF.

Residue Lys11 forms a Glycyl lysine isopeptide (Lys-Gly) (interchain with G-Cter in SUMO2) linkage. Position 63 is a phosphotyrosine (Tyr63). The residue at position 71 (Ser71) is a Phosphoserine. Lys76 is modified (N6-succinyllysine). Phosphoserine is present on Ser123. Residues Lys128 and Lys170 each participate in a glycyl lysine isopeptide (Lys-Gly) (interchain with G-Cter in SUMO2) cross-link.

It belongs to the eukaryotic ribosomal protein eL20 family. In terms of assembly, component of the large ribosomal subunit. Binds IPO9 with high affinity.

It localises to the cytoplasm. Component of the large ribosomal subunit. The ribosome is a large ribonucleoprotein complex responsible for the synthesis of proteins in the cell. This is Large ribosomal subunit protein eL20 (RPL18A) from Oryctolagus cuniculus (Rabbit).